The chain runs to 495 residues: MTLNMMLDNAVPEAIAGALTQQHPGLFFTMVEQASVAISLTDARANITYANPAFCRQTGYSLAQLLNQNPRLLASSQTPREIYQEMWQTLLQRQPWRGQLINQARDGGLYLVDIDITPVLNPQGELEHYLAMQRDISVSYTLEQRLRNHMTLMEAVLNNIPAAVVVVDEQDRVVMDNLAYKTFCADCGGKELLVELQVSPRKMGPGAEQILPVVVRGAVRWLSVTCWALPGVSEEASRYFVDSAPARTLMVIADCTQQRQQQEQGRLDRLKQQMTAGKLLAAIRESLDAALIQLNCPINMLAAARRLNGEGSGNVALDAAWREGEEAMARLQRCRPSLELESNAVWPLQPFFDDLYALYRTRFDDRARLQVDMASPHLVGFGQRTQLLACLSLWLDRTLALAAELPSVPLEIELYAEEDEGWLSLYLNDNVPLLQVRYAHSPDALNSPGKGMELRLIQTLVAYHRGAIELASRPQGGTSLVLRFPLFNTLTGGEQ.

Positions 23 to 93 (HPGLFFTMVE…QEMWQTLLQR (71 aa)) constitute a PAS 1 domain. The region spanning 94-148 (QPWRGQLINQARDGGLYLVDIDITPVLNPQGELEHYLAMQRDISVSYTLEQRLRN) is the PAC domain. Positions 151 to 174 (TLMEAVLNNIPAAVVVVDEQDRVV) constitute a PAS 2; truncated domain.

FAD serves as cofactor.

Required for the inhibition of NifA activity in response to oxygen and low level of fixed nitrogen. The protein is Nitrogen fixation regulatory protein (nifL) of Klebsiella pneumoniae.